Consider the following 175-residue polypeptide: Large ribosomal subunit protein uL10 (175 aa).

The protein belongs to the universal ribosomal protein uL10 family. In terms of assembly, part of the ribosomal stalk of the 50S ribosomal subunit. The N-terminus interacts with L11 and the large rRNA to form the base of the stalk. The C-terminus forms an elongated spine to which L12 dimers bind in a sequential fashion forming a multimeric L10(L12)X complex.

Functionally, forms part of the ribosomal stalk, playing a central role in the interaction of the ribosome with GTP-bound translation factors. The polypeptide is Large ribosomal subunit protein uL10 (Methylococcus capsulatus (strain ATCC 33009 / NCIMB 11132 / Bath)).